Reading from the N-terminus, the 341-residue chain is Queuosine 5'-phosphate N-glycosylase/hydrolase (341 aa).

Met-1 is modified (N-acetylmethionine). Queuine contacts are provided by His-53, Phe-237, Asp-239, Asp-314, Tyr-315, and Asp-319. Asp-239 functions as the Nucleophile or transition state stabilizer in the catalytic mechanism.

It belongs to the QNG1 protein family.

The enzyme catalyses queuosine 5'-phosphate + H2O = queuine + D-ribose 5-phosphate. In terms of biological role, catalyzes the hydrolysis of queuosine 5'-phosphate, releasing the nucleobase queuine (q). Is required for salvage of queuine from exogenous queuosine (Q) that is imported and then converted to queuosine 5'-phosphate intracellularly. The polypeptide is Queuosine 5'-phosphate N-glycosylase/hydrolase (Bos taurus (Bovine)).